We begin with the raw amino-acid sequence, 391 residues long: Toluene efflux pump periplasmic linker protein TtgG (391 aa).

Residues 1-32 (MRAERWSQTVRQIRSPRALRVIPLTALMLISG) form the signal peptide. Cysteine 33 is lipidated: N-palmitoyl cysteine. Cysteine 33 carries the S-diacylglycerol cysteine lipid modification. A coiled-coil region spans residues 107-136 (RTYEAQLRRAEANRTSAQNLARRYETLLKT).

Belongs to the membrane fusion protein (MFP) (TC 8.A.1) family.

Its subcellular location is the cell inner membrane. In terms of biological role, the periplasmic linker component of an organic solvent efflux pump. Involved in export of a number of organic solvents, including toluene and styrene. This is the most important solvent efflux pump in this strain, although it can export AMP and some antibiotics. This Pseudomonas putida (strain DOT-T1E) protein is Toluene efflux pump periplasmic linker protein TtgG (ttgG).